The sequence spans 466 residues: DNA repair protein RadA (466 aa).

The segment at 12–29 (CSECQHVAPKWVGRCANC) adopts a C4-type zinc-finger fold. Residue 100–107 (GDPGVGKS) participates in ATP binding. The RadA KNRFG motif signature appears at 261 to 265 (KNRFG). The segment at 359-466 (DLYLSTVGGM…MREIAIAGAQ (108 aa)) is lon-protease-like.

This sequence belongs to the RecA family. RadA subfamily. Interacts with DisA.

Its function is as follows. DNA-dependent ATPase involved in processing of recombination intermediates, plays a role in repairing DNA breaks. Stimulates the branch migration of RecA-mediated strand transfer reactions, allowing the 3' invading strand to extend heteroduplex DNA faster. Binds ssDNA in the presence of ADP but not other nucleotides, has ATPase activity that is stimulated by ssDNA and various branched DNA structures, but inhibited by SSB. Does not have RecA's homology-searching function. Also inhibits the diadenylate cyclase activity of DisA. This is DNA repair protein RadA from Mycolicibacterium smegmatis (strain ATCC 700084 / mc(2)155) (Mycobacterium smegmatis).